Consider the following 377-residue polypeptide: MIPKLYIHLILSLLLLPLILAQDYYAILEIDKDATEKEIKSAYRQLSKKYHPDKNAGSEEAHQKFIEVGEAYDVLSDPEKKKIYDQFGADAVKNGGGGGGPGGPGAGGFHDPFDIFERMFQGGHGGPGGGFGQRQRQRGPMIKVQEKLSLKQFYSGSSIEFTLNLNDECDACHGSGSADGKLAQCPDCQGRGVIIQVLRMGIMTQQIQQMCGRCGGTGQIIKNECKTCHGKKVTKKNKFFHVDVPPGAPRNYMDTRVGEAEKGPDFDAGDLVIEFKEKDTENMGYRRRGDNLYRTEVLSAAEALYGGWQRTIEFLDENKPVKLSRPAHVVVSNGEVEVVKGFGMPKGSKGYGDLYIDYVVVMPKTFKSGQNMLKDEL.

A signal peptide spans 1 to 21 (MIPKLYIHLILSLLLLPLILA). The 66-residue stretch at 23–88 (DYYAILEIDK…EKKKIYDQFG (66 aa)) folds into the J domain. The segment at 156–237 (GSSIEFTLNL…CHGKKVTKKN (82 aa)) adopts a CR-type zinc-finger fold. CXXCXGXG motif repeat units follow at residues 169–176 (CDACHGSG), 185–192 (CPDCQGRG), 211–218 (CGRCGGTG), and 225–232 (CKTCHGKK). A Cell attachment site motif is present at residues 288–290 (RGD). The Prevents secretion from ER signature appears at 374 to 377 (KDEL).

It is found in the endoplasmic reticulum lumen. Functionally, regulates protein folding in the endoplasmic reticulum lumen. Probably acts as a J-protein for the Hsp70-type chaperone KAR2 by stimulating its ATP-dependent reaction cycle and initiating folding reactions. Also involved in the endoplasmic reticulum-associated degradation (ERAD) process. Cooperates with KAR2 and another J-protein JEM1 to facilitate the export of ERAD substrates to the cytoplasm by maintaining them in a translocation-competent state and preventing their aggregation in the endoplasmic reticulum lumen. This is DnaJ-related protein SCJ1 (SCJ1) from Saccharomyces cerevisiae (strain ATCC 204508 / S288c) (Baker's yeast).